Here is a 149-residue protein sequence, read N- to C-terminus: Large ribosomal subunit protein bL9 (149 aa).

It belongs to the bacterial ribosomal protein bL9 family.

Its function is as follows. Binds to the 23S rRNA. This chain is Large ribosomal subunit protein bL9, found in Shewanella amazonensis (strain ATCC BAA-1098 / SB2B).